The chain runs to 429 residues: Protein phosphatase 2C homolog 2 (429 aa).

Residues 16–291 enclose the PPM-type phosphatase domain; sequence LYGLSAMQGW…DNMTMIIIGL (276 aa). Mn(2+) is bound by residues Asp-64, Gly-65, Asp-233, and Asp-282. 2 disordered regions span residues 320-348 and 384-429; these read YGKS…NDRS and RDVT…SASS. Over residues 384–397 the composition is skewed to basic and acidic residues; sequence RDVTNHLQHDKAEE. The segment covering 405 to 419 has biased composition (low complexity); sequence SESPSSANKNSSGSG.

The protein belongs to the PP2C family. The cofactor is Mg(2+). Requires Mn(2+) as cofactor.

The protein resides in the cytoplasm. Its subcellular location is the nucleus. It carries out the reaction O-phospho-L-seryl-[protein] + H2O = L-seryl-[protein] + phosphate. It catalyses the reaction O-phospho-L-threonyl-[protein] + H2O = L-threonyl-[protein] + phosphate. Dephosphorylating regulator for many key proteins. Dephosphorylates sakA, to negatively regulate the stress-activated p38MAPK cascade. This Aspergillus fumigatus (strain ATCC MYA-4609 / CBS 101355 / FGSC A1100 / Af293) (Neosartorya fumigata) protein is Protein phosphatase 2C homolog 2.